The following is a 400-amino-acid chain: Tryptophan synthase beta chain (400 aa).

The residue at position 92 (Lys92) is an N6-(pyridoxal phosphate)lysine.

Belongs to the TrpB family. Tetramer of two alpha and two beta chains. Pyridoxal 5'-phosphate serves as cofactor.

It carries out the reaction (1S,2R)-1-C-(indol-3-yl)glycerol 3-phosphate + L-serine = D-glyceraldehyde 3-phosphate + L-tryptophan + H2O. The protein operates within amino-acid biosynthesis; L-tryptophan biosynthesis; L-tryptophan from chorismate: step 5/5. Its function is as follows. The beta subunit is responsible for the synthesis of L-tryptophan from indole and L-serine. The polypeptide is Tryptophan synthase beta chain (Chromobacterium violaceum (strain ATCC 12472 / DSM 30191 / JCM 1249 / CCUG 213 / NBRC 12614 / NCIMB 9131 / NCTC 9757 / MK)).